We begin with the raw amino-acid sequence, 71 residues long: Protein bdm (71 aa).

This is Protein bdm (bdm) from Escherichia coli (strain K12).